Reading from the N-terminus, the 302-residue chain is MVWKRLGALVMFPLQMIYLVVKAAVGLVLPAKLRDLSRENVLITGGGRGIGRQLAREFAERGARKIVLWGRTEKCLKETTEEIRQMGTECHYFICDVGNREEVYQTAKAVREKVGDITILVNNAAVVHGKSLMDSDDDALLKSQHINTLGQFWTTKAFLPRMLELQNGHIVCLNSVLALSAIPGAIDYCTSKASAFAFMESLTLGLLDCPGVSATTVLPFHTSTEMFQGMRVRFPNLFPPLKPETVARRTVEAVQLNQALLLLPWTMHALVILKSILPQAALEEIHKFSGTYTCMNTFKGRT.

A run of 4 helical transmembrane segments spans residues Leu-9–Leu-29, Ile-170–Thr-190, Ala-195–Thr-215, and Ala-253–Leu-273. Ser-175 provides a ligand contact to substrate. Tyr-188 serves as the catalytic Proton acceptor.

This sequence belongs to the short-chain dehydrogenases/reductases (SDR) family. As to expression, widely expressed with highest levels found in heart, placenta, lung, liver, kidney, pancreas, thyroid, testis, stomach, trachea and spinal cord. Lower levels found in skeletal muscle, intestine and lymph node. No expression detected in brain. In the retina, expressed in cone but not rod outer segments.

The protein localises to the membrane. It carries out the reaction all-trans-retinol + NADP(+) = all-trans-retinal + NADPH + H(+). In terms of biological role, catalyzes the reduction of all-trans-retinal to all-trans-retinol in the presence of NADPH. This is Short-chain dehydrogenase/reductase 3 (DHRS3) from Homo sapiens (Human).